A 190-amino-acid polypeptide reads, in one-letter code: Peptidyl-tRNA hydrolase (190 aa).

Residue Tyr14 coordinates tRNA. His19 (proton acceptor) is an active-site residue. TRNA-binding residues include Tyr64, Asn66, and Asn112.

Belongs to the PTH family. As to quaternary structure, monomer.

The protein resides in the cytoplasm. The catalysed reaction is an N-acyl-L-alpha-aminoacyl-tRNA + H2O = an N-acyl-L-amino acid + a tRNA + H(+). In terms of biological role, hydrolyzes ribosome-free peptidyl-tRNAs (with 1 or more amino acids incorporated), which drop off the ribosome during protein synthesis, or as a result of ribosome stalling. Catalyzes the release of premature peptidyl moieties from peptidyl-tRNA molecules trapped in stalled 50S ribosomal subunits, and thus maintains levels of free tRNAs and 50S ribosomes. The chain is Peptidyl-tRNA hydrolase from Pelodictyon phaeoclathratiforme (strain DSM 5477 / BU-1).